A 592-amino-acid polypeptide reads, in one-letter code: Beta-xylosidase (592 aa).

An N-terminal signal peptide occupies residues 1–19; the sequence is MYLNACRALTLISVLSLLA. Cysteine 20 is lipidated: N-palmitoyl cysteine. Cysteine 20 carries S-diacylglycerol cysteine lipidation.

It belongs to the glycosyl hydrolase 43 family.

The protein resides in the cell outer membrane. Xylosidase involved in ulvan degradation. Ulvan is the main polysaccharide component of the Ulvales (green seaweed) cell wall. It is composed of disaccharide building blocks comprising 3-sulfated rhamnose (Rha3S) linked to D-glucuronic acid (GlcA), L-iduronic acid (IduA), or D-xylose (Xyl). Beta-xylosidase converts Xyl-Rha3S, a product of alpha-L-rhamnosidase acting on Rha-Xyl-Rha3S oligosaccharides, further to Xyl and Rha3S. The chain is Beta-xylosidase from Formosa agariphila (strain DSM 15362 / KCTC 12365 / LMG 23005 / KMM 3901 / M-2Alg 35-1).